A 284-amino-acid chain; its full sequence is Tropomyosin alpha-1 chain (284 aa).

A disordered region spans residues 1-38 (MDAIKKKMQMLKLDKENALDRAEQAEADKKGAEDKSKQ). A coiled-coil region spans residues 1–284 (MDAIKKKMQM…DHALNDMTSI (284 aa)). A compositionally biased stretch (basic and acidic residues) spans 12-38 (KLDKENALDRAEQAEADKKGAEDKSKQ).

The protein belongs to the tropomyosin family. Homodimer. Heterodimer of an alpha (TPM1, TPM3 or TPM4) and a beta (TPM2) chain.

It localises to the cytoplasm. It is found in the cytoskeleton. Functionally, binds to actin filaments in muscle and non-muscle cells. Plays a central role, in association with the troponin complex, in the calcium dependent regulation of vertebrate striated muscle contraction. Smooth muscle contraction is regulated by interaction with caldesmon. In non-muscle cells is implicated in stabilizing cytoskeleton actin filaments. In Xenopus laevis (African clawed frog), this protein is Tropomyosin alpha-1 chain (tpm1).